The primary structure comprises 363 residues: U-box domain-containing protein 62 (363 aa).

The tract at residues 74–117 is disordered; the sequence is KPIIGNPNDSGGSDGEDDVDVEEEDEDDDLDGNEGDIGMNKDAG. Over residues 87–107 the composition is skewed to acidic residues; it reads DGEDDVDVEEEDEDDDLDGNE. Residues 181–253 form the U-box domain; the sequence is SLRTILSDPT…QAFCREENSQ (73 aa). Positions 343 to 363 are disordered; the sequence is AKAPEDPSAKATPNKMVSNWL.

It carries out the reaction S-ubiquitinyl-[E2 ubiquitin-conjugating enzyme]-L-cysteine + [acceptor protein]-L-lysine = [E2 ubiquitin-conjugating enzyme]-L-cysteine + N(6)-ubiquitinyl-[acceptor protein]-L-lysine.. It functions in the pathway protein modification; protein ubiquitination. Functions as an E3 ubiquitin ligase. The polypeptide is U-box domain-containing protein 62 (PUB62) (Arabidopsis thaliana (Mouse-ear cress)).